Reading from the N-terminus, the 484-residue chain is ATP synthase subunit beta (484 aa).

Residue Gly-162 to Thr-169 participates in ATP binding.

It belongs to the ATPase alpha/beta chains family. In terms of assembly, F-type ATPases have 2 components, CF(1) - the catalytic core - and CF(0) - the membrane proton channel. CF(1) has five subunits: alpha(3), beta(3), gamma(1), delta(1), epsilon(1). CF(0) has three main subunits: a(1), b(2) and c(9-12). The alpha and beta chains form an alternating ring which encloses part of the gamma chain. CF(1) is attached to CF(0) by a central stalk formed by the gamma and epsilon chains, while a peripheral stalk is formed by the delta and b chains.

It is found in the cell inner membrane. The enzyme catalyses ATP + H2O + 4 H(+)(in) = ADP + phosphate + 5 H(+)(out). Its function is as follows. Produces ATP from ADP in the presence of a proton gradient across the membrane. The catalytic sites are hosted primarily by the beta subunits. In Agrobacterium fabrum (strain C58 / ATCC 33970) (Agrobacterium tumefaciens (strain C58)), this protein is ATP synthase subunit beta.